The following is a 204-amino-acid chain: Large ribosomal subunit protein uL4 (204 aa).

Residues 47 to 69 are disordered; the sequence is KAQKTRAEVSGGGKKPWRQKGTG.

Belongs to the universal ribosomal protein uL4 family. Part of the 50S ribosomal subunit.

Its function is as follows. One of the primary rRNA binding proteins, this protein initially binds near the 5'-end of the 23S rRNA. It is important during the early stages of 50S assembly. It makes multiple contacts with different domains of the 23S rRNA in the assembled 50S subunit and ribosome. Forms part of the polypeptide exit tunnel. This is Large ribosomal subunit protein uL4 from Cellvibrio japonicus (strain Ueda107) (Pseudomonas fluorescens subsp. cellulosa).